Reading from the N-terminus, the 385-residue chain is MTTKLYVDFGGYSAIEKGNLIIPRDNILNKEDFDSIEIGEVVDIYSKRGKFLGRGFKNPKEVRIMTLRKEDLDENYIREKIIKANEYRLKLGFKDTYRMVYTQSDWLNGLVIDKYNDIATVQIFNYGIEKMKDVVVETLLDLGIDSIYEKSSGRNRKRAGLPEVEGILAGEKTETIIQEGEAKFKVTFDGQKTGFFLDQRENRLELEKFIKEGDRVLDICCYTGGFSVHAAIRGAEVVGVDLSKKALKLAEENMELNNIPKDRYEFIEGNAFKVMEEFIEDGEKFDVVILDPPAFAQSKKALKSAIKGYHMLNRFGAKLADRLLVTCSCSQPLEPDAFKALVIDACLKAKKWAKIIKYGSQSPDHPITSKGTEYLKCLFLSVEEI.

A PUA domain is found at 2–81 (TTKLYVDFGG…LDENYIREKI (80 aa)).

It belongs to the methyltransferase superfamily. RlmI family.

The protein localises to the cytoplasm. This chain is Putative ribosomal RNA large subunit methyltransferase MJ1653, found in Methanocaldococcus jannaschii (strain ATCC 43067 / DSM 2661 / JAL-1 / JCM 10045 / NBRC 100440) (Methanococcus jannaschii).